The following is a 227-amino-acid chain: Cytochrome c oxidase subunit 2 (227 aa).

Residues 1–14 (MAYPYELGFQDASS) lie on the Mitochondrial intermembrane side of the membrane. A helical transmembrane segment spans residues 15-45 (PIMEELLHFHDHTLMIVFLISTLVLYLITIM). Residues 46–59 (LTTKLTHTSTMDAQ) lie on the Mitochondrial matrix side of the membrane. The helical transmembrane segment at 60–87 (EIETIWTILPAIILILIALPSLRILYMM) threads the bilayer. Over 88 to 227 (DEINSPSLTV…DFEIWSSSML (140 aa)) the chain is Mitochondrial intermembrane. Cu cation is bound by residues H161, C196, E198, C200, H204, and M207. E198 provides a ligand contact to Mg(2+).

The protein belongs to the cytochrome c oxidase subunit 2 family. As to quaternary structure, component of the cytochrome c oxidase (complex IV, CIV), a multisubunit enzyme composed of 14 subunits. The complex is composed of a catalytic core of 3 subunits MT-CO1, MT-CO2 and MT-CO3, encoded in the mitochondrial DNA, and 11 supernumerary subunits COX4I, COX5A, COX5B, COX6A, COX6B, COX6C, COX7A, COX7B, COX7C, COX8 and NDUFA4, which are encoded in the nuclear genome. The complex exists as a monomer or a dimer and forms supercomplexes (SCs) in the inner mitochondrial membrane with NADH-ubiquinone oxidoreductase (complex I, CI) and ubiquinol-cytochrome c oxidoreductase (cytochrome b-c1 complex, complex III, CIII), resulting in different assemblies (supercomplex SCI(1)III(2)IV(1) and megacomplex MCI(2)III(2)IV(2)). Found in a complex with TMEM177, COA6, COX18, COX20, SCO1 and SCO2. Interacts with TMEM177 in a COX20-dependent manner. Interacts with COX20. Interacts with COX16. Cu cation is required as a cofactor.

The protein localises to the mitochondrion inner membrane. The enzyme catalyses 4 Fe(II)-[cytochrome c] + O2 + 8 H(+)(in) = 4 Fe(III)-[cytochrome c] + 2 H2O + 4 H(+)(out). In terms of biological role, component of the cytochrome c oxidase, the last enzyme in the mitochondrial electron transport chain which drives oxidative phosphorylation. The respiratory chain contains 3 multisubunit complexes succinate dehydrogenase (complex II, CII), ubiquinol-cytochrome c oxidoreductase (cytochrome b-c1 complex, complex III, CIII) and cytochrome c oxidase (complex IV, CIV), that cooperate to transfer electrons derived from NADH and succinate to molecular oxygen, creating an electrochemical gradient over the inner membrane that drives transmembrane transport and the ATP synthase. Cytochrome c oxidase is the component of the respiratory chain that catalyzes the reduction of oxygen to water. Electrons originating from reduced cytochrome c in the intermembrane space (IMS) are transferred via the dinuclear copper A center (CU(A)) of subunit 2 and heme A of subunit 1 to the active site in subunit 1, a binuclear center (BNC) formed by heme A3 and copper B (CU(B)). The BNC reduces molecular oxygen to 2 water molecules using 4 electrons from cytochrome c in the IMS and 4 protons from the mitochondrial matrix. The protein is Cytochrome c oxidase subunit 2 (MT-CO2) of Cavia aperea (Brazilian guinea pig).